A 309-amino-acid polypeptide reads, in one-letter code: Ecotin-like protein 3 (309 aa).

A disordered region spans residues 140 to 309 (QQELEAPAVS…KSGRDSRRNS (170 aa)). The segment covering 156-167 (VRERQNNPEGHA) has biased composition (basic and acidic residues). Low complexity predominate over residues 168–180 (HPVVVHSVESPEV). The span at 181-190 (SGHKDGDQPM) shows a compositional bias: basic and acidic residues. The segment covering 196-205 (LKQSCSNSSR) has biased composition (low complexity). A compositionally biased stretch (polar residues) spans 209–221 (HSASGSSPKNTPL). Positions 261–279 (SDSTSSRKDDQDSGYEKKV) are enriched in basic and acidic residues. The segment covering 290–299 (SSPKRSASPK) has biased composition (low complexity).

It belongs to the protease inhibitor I11 (ecotin) family.

The chain is Ecotin-like protein 3 from Leishmania braziliensis.